Reading from the N-terminus, the 443-residue chain is MTQQKSQRVPRVGFVSLGCPKATVDSEHILTRLRAEGYDLSGSYDDADLVVVNTCGFIDAAVEESLDAIGEALAENGKVIVTGCLGAKDDVILAAHPQVLAVTGPHATDAVVKAVHQHLPKPHDPFTDLIPPQGIRLTPAHYAYLKISEGCNHRCSFCIIPSMRGDLVSRPVHDVMREAESLVDSGVKELLVISQDTSAYGVDMKYRTGFWNGRPLKTRLIDLAKALGELGVWVRMHYVYPYPSVDELIPLMAEGKILPYLDVPFQHASPRILKAMKRPGNVENVLERIRKWRSICPDLTIRSTFITGFPGETDEDFEQLLRFLEEAQLDRVGAFAYSPVEGAAANLLADPVPDEVREERRMRLMDFQEDISTQRLERWIGRDITVLVEEVDDEGAVARSGSDAPEVDGLVIIPDGDGLVPGEFAKVRVTDCDVHDLYARPLP.

The region spanning 10-120 is the MTTase N-terminal domain; sequence PRVGFVSLGC…VVKAVHQHLP (111 aa). 6 residues coordinate [4Fe-4S] cluster: cysteine 19, cysteine 55, cysteine 84, cysteine 151, cysteine 155, and cysteine 158. A Radical SAM core domain is found at 137-375; sequence LTPAHYAYLK…DFQEDISTQR (239 aa). In terms of domain architecture, TRAM spans 377–443; the sequence is ERWIGRDITV…VHDLYARPLP (67 aa).

It belongs to the methylthiotransferase family. RimO subfamily. [4Fe-4S] cluster is required as a cofactor.

Its subcellular location is the cytoplasm. The catalysed reaction is L-aspartate(89)-[ribosomal protein uS12]-hydrogen + (sulfur carrier)-SH + AH2 + 2 S-adenosyl-L-methionine = 3-methylsulfanyl-L-aspartate(89)-[ribosomal protein uS12]-hydrogen + (sulfur carrier)-H + 5'-deoxyadenosine + L-methionine + A + S-adenosyl-L-homocysteine + 2 H(+). Catalyzes the methylthiolation of an aspartic acid residue of ribosomal protein uS12. The sequence is that of Ribosomal protein uS12 methylthiotransferase RimO from Aromatoleum aromaticum (strain DSM 19018 / LMG 30748 / EbN1) (Azoarcus sp. (strain EbN1)).